Consider the following 180-residue polypeptide: Large ribosomal subunit protein uL5 (180 aa).

This sequence belongs to the universal ribosomal protein uL5 family. In terms of assembly, part of the 50S ribosomal subunit; part of the 5S rRNA/L5/L18/L25 subcomplex. Contacts the 5S rRNA and the P site tRNA. Forms a bridge to the 30S subunit in the 70S ribosome.

Functionally, this is one of the proteins that bind and probably mediate the attachment of the 5S RNA into the large ribosomal subunit, where it forms part of the central protuberance. In the 70S ribosome it contacts protein S13 of the 30S subunit (bridge B1b), connecting the 2 subunits; this bridge is implicated in subunit movement. Contacts the P site tRNA; the 5S rRNA and some of its associated proteins might help stabilize positioning of ribosome-bound tRNAs. The chain is Large ribosomal subunit protein uL5 from Streptococcus suis (strain 05ZYH33).